Reading from the N-terminus, the 236-residue chain is Putative N-acetylmannosamine-6-phosphate 2-epimerase (236 aa).

Belongs to the NanE family.

The catalysed reaction is an N-acyl-D-glucosamine 6-phosphate = an N-acyl-D-mannosamine 6-phosphate. It participates in amino-sugar metabolism; N-acetylneuraminate degradation; D-fructose 6-phosphate from N-acetylneuraminate: step 3/5. Its function is as follows. Converts N-acetylmannosamine-6-phosphate (ManNAc-6-P) to N-acetylglucosamine-6-phosphate (GlcNAc-6-P). This Listeria welshimeri serovar 6b (strain ATCC 35897 / DSM 20650 / CCUG 15529 / CIP 8149 / NCTC 11857 / SLCC 5334 / V8) protein is Putative N-acetylmannosamine-6-phosphate 2-epimerase.